Here is a 95-residue protein sequence, read N- to C-terminus: Co-chaperonin GroES (95 aa).

Belongs to the GroES chaperonin family. As to quaternary structure, heptamer of 7 subunits arranged in a ring. Interacts with the chaperonin GroEL.

It localises to the cytoplasm. In terms of biological role, together with the chaperonin GroEL, plays an essential role in assisting protein folding. The GroEL-GroES system forms a nano-cage that allows encapsulation of the non-native substrate proteins and provides a physical environment optimized to promote and accelerate protein folding. GroES binds to the apical surface of the GroEL ring, thereby capping the opening of the GroEL channel. This is Co-chaperonin GroES from Xylella fastidiosa (strain M23).